The primary structure comprises 269 residues: Diaminopimelate epimerase (269 aa).

Residues Asn-13, Gln-46, and Asn-65 each contribute to the substrate site. The Proton donor role is filled by Cys-74. Residues 75-76 (GN), Asn-149, Asn-182, and 200-201 (ER) each bind substrate. The Proton acceptor role is filled by Cys-209. Residue 210–211 (GT) participates in substrate binding.

This sequence belongs to the diaminopimelate epimerase family. As to quaternary structure, homodimer.

Its subcellular location is the cytoplasm. It carries out the reaction (2S,6S)-2,6-diaminopimelate = meso-2,6-diaminopimelate. It participates in amino-acid biosynthesis; L-lysine biosynthesis via DAP pathway; DL-2,6-diaminopimelate from LL-2,6-diaminopimelate: step 1/1. In terms of biological role, catalyzes the stereoinversion of LL-2,6-diaminopimelate (L,L-DAP) to meso-diaminopimelate (meso-DAP), a precursor of L-lysine and an essential component of the bacterial peptidoglycan. The polypeptide is Diaminopimelate epimerase (Zymomonas mobilis subsp. mobilis (strain ATCC 31821 / ZM4 / CP4)).